The primary structure comprises 376 residues: Chaperone protein DnaJ (376 aa).

The J domain maps to 5-70 (DYYEVLGLSK…QKKANYDQFG (66 aa)). The CR-type zinc-finger motif lies at 133–215 (GVEKEISITR…CHGKGTVRKN (83 aa)). Zn(2+) contacts are provided by Cys146, Cys149, Cys163, Cys166, Cys189, Cys192, Cys203, and Cys206. CXXCXGXG motif repeat units lie at residues 146–153 (CDTCAGSG), 163–170 (CDKCGGTG), 189–196 (CDKCGGSG), and 203–210 (CTTCHGKG).

Belongs to the DnaJ family. Homodimer. Zn(2+) is required as a cofactor.

It is found in the cytoplasm. Participates actively in the response to hyperosmotic and heat shock by preventing the aggregation of stress-denatured proteins and by disaggregating proteins, also in an autonomous, DnaK-independent fashion. Unfolded proteins bind initially to DnaJ; upon interaction with the DnaJ-bound protein, DnaK hydrolyzes its bound ATP, resulting in the formation of a stable complex. GrpE releases ADP from DnaK; ATP binding to DnaK triggers the release of the substrate protein, thus completing the reaction cycle. Several rounds of ATP-dependent interactions between DnaJ, DnaK and GrpE are required for fully efficient folding. Also involved, together with DnaK and GrpE, in the DNA replication of plasmids through activation of initiation proteins. The chain is Chaperone protein DnaJ from Clostridium novyi (strain NT).